We begin with the raw amino-acid sequence, 571 residues long: Proline--tRNA ligase (571 aa).

It belongs to the class-II aminoacyl-tRNA synthetase family. ProS type 1 subfamily. In terms of assembly, homodimer.

It is found in the cytoplasm. The catalysed reaction is tRNA(Pro) + L-proline + ATP = L-prolyl-tRNA(Pro) + AMP + diphosphate. Functionally, catalyzes the attachment of proline to tRNA(Pro) in a two-step reaction: proline is first activated by ATP to form Pro-AMP and then transferred to the acceptor end of tRNA(Pro). As ProRS can inadvertently accommodate and process non-cognate amino acids such as alanine and cysteine, to avoid such errors it has two additional distinct editing activities against alanine. One activity is designated as 'pretransfer' editing and involves the tRNA(Pro)-independent hydrolysis of activated Ala-AMP. The other activity is designated 'posttransfer' editing and involves deacylation of mischarged Ala-tRNA(Pro). The misacylated Cys-tRNA(Pro) is not edited by ProRS. This is Proline--tRNA ligase from Pseudomonas putida (strain ATCC 47054 / DSM 6125 / CFBP 8728 / NCIMB 11950 / KT2440).